The chain runs to 432 residues: Cyclic GMP-AMP synthase (432 aa).

110 to 115 provides a ligand contact to GTP; sequence QGSFQY. Positions 129 and 131 each coordinate Mg(2+). R180 contributes to the ATP binding site. D191 is a binding site for Mg(2+). Position 255 (S255) interacts with ATP. The GTP site is built by K283, S297, and D344. G432 participates in a covalent cross-link: Glycyl cysteine dithioester (Gly-Cys) (interchain with C-13 in Cap2). A Glycyl cysteine dithioester (Gly-Cys) (interchain with C-493 in Cap2) cross-link involves residue G432. Residue G432 forms a Glycyl cysteine dithioester (Gly-Cys) (interchain with C-513 in Cap2) linkage. G432 is covalently cross-linked (Glycyl lysine isopeptide (Gly-Lys) (interchain with K-? in acceptor proteins)).

The protein belongs to the CD-NTase family. A02 subfamily. A Cap2 dimer is bound on either side by a DncV monomer. Mg(2+) serves as cofactor. In terms of processing, in bacteria expressing capV-dncV-cap2-cap3, this protein is conjugated to about 130 cellular proteins by Cap2, most of which are involved in metabolism; more conjugated protein is found in the absence of Cap3. Most conjugation occurs via an isopeptide bond with the epsilon-amine of Lys on the target protein, but Cys-conjugation also occurs, including to Cap2. Conjugation or deconjugation from cellular proteins does not change the DncV activity in vitro, but does so in vivo during infection. Post-translationally, (Microbial infection) During phage T4 infection is conjugated to at least 2 T4 proteins (fibritin (wac) and dexA.2).

The catalysed reaction is GTP + ATP = 3',3'-cGAMP + 2 diphosphate. Primed for activation by Cap2 which conjugates it to cellular proteins. cGAMP production is induced in phage T4 infected cells in a manner that requires Cap2 and Cap3, as well as a C-terminal Ala or Gly residue in this protein. Its function is as follows. Cyclic nucleotide synthase (second messenger synthase) of a CBASS antivirus system. CBASS (cyclic oligonucleotide-based antiphage signaling system) provides immunity against bacteriophages. The CD-NTase protein (DncV, this protein) synthesizes cyclic nucleotides in response to infection; these serve as specific second messenger signals. The signals activate a diverse range of effectors, leading to bacterial cell death and thus abortive phage infection. A type II-A(GA) CBASS system. Functionally, catalyzes the synthesis of 3',3'-cyclic GMP-AMP (cGAMP) from GTP and ATP, a second messenger in cell signal transduction. Its product controls the activity of cGAMP-activated phospholipase CapV, a patatin-like lipase that is a direct cGAMP receptor encoded in the dncV operon. In terms of biological role, protects E.coli against phage infection. When capV and dncV are introduced in E.coli MG1655 there is 1000-fold protection against phage P1; protection against other phage (T2, T4, T5, T6 and lambda-vir) requires the 2 subsequent genes (cap2 and cap3). In another paper the capV-dncV-cap2-cap3 operon gives 10(4)-10(5)-fold protection against phages lambda, T2, T4 and T6, about 1000-fold protection against P1 and 10-fold protection against T5. The protein is Cyclic GMP-AMP synthase of Escherichia coli (strain TW11681).